Consider the following 137-residue polypeptide: MQLQIHNTTRRKLDDALLCRAVETVIQGEGRHALEIAAVYCGSRMSRRINREYLQHDWPTDTISFPYGSGGNVEGEFYICLDVIEENARRFNTDFERELFRVTIHSVLHLAGYDDHLPEDRRRMTEREDSYLQQLFR.

Residues histidine 105, histidine 109, and aspartate 115 each coordinate Zn(2+).

This sequence belongs to the endoribonuclease YbeY family. Zn(2+) serves as cofactor.

It localises to the cytoplasm. Its function is as follows. Single strand-specific metallo-endoribonuclease involved in late-stage 70S ribosome quality control and in maturation of the 3' terminus of the 16S rRNA. The sequence is that of Endoribonuclease YbeY from Chlorobium luteolum (strain DSM 273 / BCRC 81028 / 2530) (Pelodictyon luteolum).